A 195-amino-acid chain; its full sequence is MEHDTLIQSQIEDSIRVKAQLLPSLLPNIKAAGKVLVDSLKGDGILYFAGNGGSSCDASHIAAELVIRYKSGNERKAIPAIALNSDQAVLTACANDYGYEFLFQRQLQAFGKSKDVFIGLTTSGNSKNIILAVEEAKKNGMKVVLLLGGDGGKLKGKADVEIIIPSSVTARIQESHILIGHILCSIIEKELFGLD.

Residues L36–D195 enclose the SIS domain. Position 51-53 (N51–G53) interacts with substrate. Residues H60 and E64 each coordinate Zn(2+). Substrate is bound by residues E64, N95–D96, T121–S123, S126, and Q173. Zn(2+) contacts are provided by Q173 and H181.

Belongs to the SIS family. GmhA subfamily. Zn(2+) serves as cofactor.

The protein resides in the cytoplasm. It catalyses the reaction 2 D-sedoheptulose 7-phosphate = D-glycero-alpha-D-manno-heptose 7-phosphate + D-glycero-beta-D-manno-heptose 7-phosphate. Its pathway is carbohydrate biosynthesis; D-glycero-D-manno-heptose 7-phosphate biosynthesis; D-glycero-alpha-D-manno-heptose 7-phosphate and D-glycero-beta-D-manno-heptose 7-phosphate from sedoheptulose 7-phosphate: step 1/1. Catalyzes the isomerization of sedoheptulose 7-phosphate in D-glycero-D-manno-heptose 7-phosphate. The chain is Phosphoheptose isomerase from Leptospira biflexa serovar Patoc (strain Patoc 1 / Ames).